A 501-amino-acid chain; its full sequence is Cytochrome P450 7A1 (501 aa).

Residues 4–24 traverse the membrane as a helical segment; it reads IFWIWGICLSVCCCLWLILGL. Cys-441 provides a ligand contact to heme.

The protein belongs to the cytochrome P450 family. Heme is required as a cofactor. Detected in liver.

It localises to the endoplasmic reticulum membrane. It is found in the microsome membrane. The enzyme catalyses cholesterol + reduced [NADPH--hemoprotein reductase] + O2 = 7alpha-hydroxycholesterol + oxidized [NADPH--hemoprotein reductase] + H2O + H(+). It carries out the reaction 4beta-hydroxycholesterol + reduced [NADPH--hemoprotein reductase] + O2 = 4beta,7alpha-dihydroxycholesterol + oxidized [NADPH--hemoprotein reductase] + H2O + H(+). The catalysed reaction is lathosterol + reduced [NADPH--hemoprotein reductase] + O2 = 7alpha,8alpha-epoxy-5alpha-cholestan-3beta-ol + oxidized [NADPH--hemoprotein reductase] + H2O + H(+). It catalyses the reaction lathosterol + reduced [NADPH--hemoprotein reductase] + O2 = 5alpha-cholestan-7-oxo-3beta-ol + oxidized [NADPH--hemoprotein reductase] + H2O + H(+). The enzyme catalyses 7-dehydrocholesterol + reduced [NADPH--hemoprotein reductase] + O2 = 7-oxocholesterol + oxidized [NADPH--hemoprotein reductase] + H2O + H(+). It carries out the reaction (24S)-hydroxycholesterol + reduced [NADPH--hemoprotein reductase] + O2 = (24S)-7alpha-dihydroxycholesterol + oxidized [NADPH--hemoprotein reductase] + H2O + H(+). The catalysed reaction is (24R)-hydroxycholesterol + reduced [NADPH--hemoprotein reductase] + O2 = (24R)-7alpha-dihydroxycholesterol + oxidized [NADPH--hemoprotein reductase] + H2O + H(+). Its pathway is lipid metabolism; bile acid biosynthesis. It functions in the pathway steroid metabolism; cholesterol degradation. Its function is as follows. A cytochrome P450 monooxygenase involved in the metabolism of endogenous cholesterol and its oxygenated derivatives (oxysterols). Mechanistically, uses molecular oxygen inserting one oxygen atom into a substrate, and reducing the second into a water molecule, with two electrons provided by NADPH via cytochrome P450 reductase (CPR; NADPH-ferrihemoprotein reductase). Functions as a critical regulatory enzyme of bile acid biosynthesis and cholesterol homeostasis. Catalyzes the hydroxylation of carbon hydrogen bond at 7-alpha position of cholesterol, a rate-limiting step in cholesterol catabolism and bile acid biosynthesis. 7-alpha hydroxylates several oxysterols, including 4beta-hydroxycholesterol and 24-hydroxycholesterol. Catalyzes the oxidation of the 7,8 double bond of 7-dehydrocholesterol and lathosterol with direct and predominant formation of the 7-keto derivatives. The sequence is that of Cytochrome P450 7A1 (CYP7A1) from Oryctolagus cuniculus (Rabbit).